The following is a 1744-amino-acid chain: Retrotransposon-like protein 1 (1744 aa).

3 disordered regions span residues 1-416 (MIEP…SPEE), 823-859 (READ…DQSG), and 1287-1439 (SSET…EVPS). A compositionally biased stretch (low complexity) spans 19–30 (SSKQMESSEGSS). The segment covering 31–40 (NTVEETPGSS) has biased composition (polar residues). Over residues 41–80 (GAQAGAQAGAQAEAQAETQVEAQAEAQAEAQVEAQVEAQA) the composition is skewed to low complexity. Positions 269-318 (DGSNQESSDGSNHELSNGSNHESSFGSNPESSDVSNLESSGGSNQESSDG) are enriched in polar residues. Residues 332–361 (SDNSNQELSDNSNQESSDSSNQSSDISNQE) are compositionally biased toward low complexity. 3 stretches are compositionally biased toward acidic residues: residues 385–407 (SDQD…GEEE), 837–846 (GSDDLSESEP), and 1291–1437 (EDKE…DEEV). The next 2 helical transmembrane spans lie at 1473 to 1493 (FFRG…LVML) and 1520 to 1540 (LILD…AQLL).

Expressed in placenta and in various tissues in late-fetal stage.

The protein localises to the membrane. Plays an essential role in capillaries endothelial cells for the maintenance of feto-maternal interface and for development of the placenta. This Mus musculus (Mouse) protein is Retrotransposon-like protein 1 (Rtl1).